The following is a 219-amino-acid chain: Transmembrane protein 125 (219 aa).

Transmembrane regions (helical) follow at residues 36–56 (LCFV…VALL), 68–88 (LATG…QLMS), 114–134 (ALVV…LAGL), and 147–167 (MLSV…GLLL).

Its subcellular location is the membrane. The protein is Transmembrane protein 125 (TMEM125) of Homo sapiens (Human).